The following is a 176-amino-acid chain: Protein SPMIP1 (176 aa).

The interval 55–80 (TLHPKAPLSPPPAPKSAPSKVPSPVP) is disordered. The segment covering 61 to 80 (PLSPPPAPKSAPSKVPSPVP) has biased composition (pro residues).

This Homo sapiens (Human) protein is Protein SPMIP1.